Here is a 257-residue protein sequence, read N- to C-terminus: Ribonuclease HII (257 aa).

One can recognise an RNase H type-2 domain in the interval 71–257; it reads SLIAGIDEVG…TSFEPIKSML (187 aa). Positions 77, 78, and 172 each coordinate a divalent metal cation.

The protein belongs to the RNase HII family. Requires Mn(2+) as cofactor. It depends on Mg(2+) as a cofactor.

Its subcellular location is the cytoplasm. It carries out the reaction Endonucleolytic cleavage to 5'-phosphomonoester.. In terms of biological role, endonuclease that specifically degrades the RNA of RNA-DNA hybrids. This Streptococcus uberis (strain ATCC BAA-854 / 0140J) protein is Ribonuclease HII.